Reading from the N-terminus, the 119-residue chain is C-C motif chemokine 24 (119 aa).

An N-terminal signal peptide occupies residues 1–26 (MAGLATFVVSLLLVTLCAHCIDPAGS). Intrachain disulfides connect Cys-33-Cys-58 and Cys-34-Cys-74. Residues Asn-54 and Asn-115 are each glycosylated (N-linked (GlcNAc...) asparagine).

The protein belongs to the intercrine beta (chemokine CC) family.

It localises to the secreted. Functionally, chemotactic for resting T-lymphocytes, and eosinophils. Has lower chemotactic activity for neutrophils but none for monocytes and activated lymphocytes. Is a strong suppressor of colony formation by a multipotential hematopoietic progenitor cell line. Binds to CCR3. The chain is C-C motif chemokine 24 from Canis lupus familiaris (Dog).